The following is a 206-amino-acid chain: Large ribosomal subunit protein uL4 (206 aa).

Residues 45–85 (QGNRAQKDREQVKHTTKKPWRQKGTGRARAGMSSSPLWRGG) are disordered. Residues 58–70 (HTTKKPWRQKGTG) show a composition bias toward basic residues.

It belongs to the universal ribosomal protein uL4 family. As to quaternary structure, part of the 50S ribosomal subunit.

Functionally, one of the primary rRNA binding proteins, this protein initially binds near the 5'-end of the 23S rRNA. It is important during the early stages of 50S assembly. It makes multiple contacts with different domains of the 23S rRNA in the assembled 50S subunit and ribosome. Forms part of the polypeptide exit tunnel. The chain is Large ribosomal subunit protein uL4 from Burkholderia mallei (strain NCTC 10247).